Reading from the N-terminus, the 527-residue chain is Succinate-semialdehyde dehydrogenase, mitochondrial (527 aa).

Residues 1–35 (MAMAMAMRRAAALGARHILAASSTSSSGVLLRRHM) constitute a mitochondrion transit peptide. Residues Arg208, 223–226 (KPSE), and 276–281 (GSTAVG) contribute to the NAD(+) site. A substrate-binding site is contributed by Arg208. Glu298 acts as the Proton acceptor in catalysis. Residues Arg326, Cys332, and Ser489 each coordinate substrate. The Nucleophile role is filled by Cys332. A disulfide bridge connects residues Cys332 and Cys334.

Belongs to the aldehyde dehydrogenase family. Homotetramer.

It localises to the mitochondrion matrix. It carries out the reaction succinate semialdehyde + NAD(+) + H2O = succinate + NADH + 2 H(+). It functions in the pathway amino-acid degradation; 4-aminobutanoate degradation. Its activity is regulated as follows. Redox-regulated. Inhibited under oxydizing conditions. Its function is as follows. Oxidizes specifically succinate semialdehyde. Involved in plant response to environmental stress by preventing the accumulation of reactive oxygen species. The chain is Succinate-semialdehyde dehydrogenase, mitochondrial (ALDH5F1) from Oryza sativa subsp. japonica (Rice).